Here is a 326-residue protein sequence, read N- to C-terminus: MFRNNQPDQNNNEDENNTNLNSNNNNRTTTTTTTTSSNINSNNNNNNNNNINNNNNNNNNNNNNNNNNNNNNNNNNNNNNNNNNNNNNNNNNNNNNNNNNNNNNRDFIIRTIMQDLRLGIRDIIHPSTLTGLLGGYINALANLDQNQSSSSSSGASGSRSGSSALNSINNNNYSPTTSSLNRVRNQYNQVVRDEEDDDYDNGAEDGFDYDGDDNEDGSDSACESKKKRGRPRKPTPERCSNCKITHSSYWRRITVNGQKLDFCNACGLHQMKRNNRIKESKQRHSIQNIMNQNQEEEEEEREEEEEEEEEEDEEFETLEEEEEDDE.

Disordered regions lie at residues 1–102 and 145–238; these read MFRN…NNNN and QNQS…TPER. 2 stretches are compositionally biased toward low complexity: residues 17–102 and 148–164; these read NTNL…NNNN and SSSS…GSSA. Positions 165-189 are enriched in polar residues; the sequence is LNSINNNNYSPTTSSLNRVRNQYNQ. Acidic residues predominate over residues 193–218; that stretch reads DEEDDDYDNGAEDGFDYDGDDNEDGS. The GATA-type zinc finger occupies 239-266; the sequence is CSNCKITHSSYWRRITVNGQKLDFCNAC. The interval 277 to 326 is disordered; that stretch reads IKESKQRHSIQNIMNQNQEEEEEEREEEEEEEEEEDEEFETLEEEEEDDE. A compositionally biased stretch (acidic residues) spans 294–326; that stretch reads QEEEEEEREEEEEEEEEEDEEFETLEEEEEDDE.

The chain is GATA zinc finger domain-containing protein 21 (gtaU) from Dictyostelium discoideum (Social amoeba).